The sequence spans 357 residues: Acyl-CoA Delta12-desaturase (357 aa).

The next 2 membrane-spanning stretches (helical) occupy residues 49 to 69 (VLWFVLLHAGALYGVYLIFAS) and 72 to 92 (IYTTLYGFLLCELSLLSITAG). Positions 94, 99, 131, 134, and 135 each coordinate Fe cation. The Histidine box-1 signature appears at 94-99 (HRLWAH). Positions 131–135 (HRVHH) match the Histidine box-2 motif. 2 consecutive transmembrane segments (helical) span residues 195–215 (LVPFVSFVIPTLIPMYFWGET) and 223–245 (STMFRYCLSLNLTWLVNSAAHMW). Residues histidine 243, histidine 272, histidine 275, and histidine 276 each coordinate Fe cation. The Histidine box-3 signature appears at 272–276 (HNFHH).

It belongs to the fatty acid desaturase type 1 family. Fe(2+) is required as a cofactor.

The protein resides in the membrane. The enzyme catalyses (9Z)-octadecenoyl-CoA + 2 Fe(II)-[cytochrome b5] + O2 + 2 H(+) = (9Z,12Z)-octadecadienoyl-CoA + 2 Fe(III)-[cytochrome b5] + 2 H2O. It catalyses the reaction (9Z)-hexadecenoyl-CoA + 2 Fe(II)-[cytochrome b5] + O2 + 2 H(+) = (9Z,12Z)-hexadecadienoyl-CoA + 2 Fe(III)-[cytochrome b5] + 2 H2O. It carries out the reaction hexadecanoyl-CoA + 2 Fe(II)-[cytochrome b5] + O2 + 2 H(+) = (9Z)-hexadecenoyl-CoA + 2 Fe(III)-[cytochrome b5] + 2 H2O. Functionally, catalyzes the formation of a Delta12 double bond, acting on monounsaturated fatty acyl substrates like palmitoleoyl-CoA ((9Z)-hexadecenoyl-CoA) and oleoyl-CoA ((9Z)-octadecenoyl-CoA) with higher desaturation activity on (9Z)-octadecenoyl-CoA than (9Z)-hexadecenoyl-CoA. Requires preexisting cis double bond at the Delta9 position of fatty acyls to be able to insert the Delta12 double bond. Delta12-desaturation of (9Z)-octadecenoyl-CoA in insects produces (9Z,12Z)-octadecadienoyl-CoA (linoleoyl-CoA) which may be used to supply precursors of crucial mediators of immunity and reproduction and other essential functions. Can also catalyze Delta9-desaturation on saturated fatty acyl substrates like palmitoyl-CoA (hexadecanoyl-CoA) but with lower efficiency. The chain is Acyl-CoA Delta12-desaturase from Acheta domesticus (House cricket).